Consider the following 178-residue polypeptide: CASP-like protein 5A1 (178 aa).

Positions 1–11 are enriched in low complexity; it reads MFASRPAVHPV. Residues 1-25 are disordered; the sequence is MFASRPAVHPVEAPPPPDPAEQPRG. Topologically, residues 1 to 37 are cytoplasmic; the sequence is MFASRPAVHPVEAPPPPDPAEQPRGVLMKDLPGMPGT. Residues 38–58 traverse the membrane as a helical segment; the sequence is AGGLGLRLAQFAFAAVALAVM. Topologically, residues 59-69 are extracellular; that stretch reads ASTNDFPSVTS. Residues 70–90 traverse the membrane as a helical segment; it reads FCFLVAAAILQCLWSFSLAIV. Residues 91 to 105 lie on the Cytoplasmic side of the membrane; that stretch reads DIYALLVKRCLRNRR. Residues 106–126 traverse the membrane as a helical segment; that stretch reads AVCLFAIGDGITAALTFSAAC. Residues 127 to 152 lie on the Extracellular side of the membrane; that stretch reads ASSGITVLIDNDLDLCSENHCASFES. The helical transmembrane segment at 153–173 threads the bilayer; that stretch reads ATAMAFLSWFALSPSFLLNFW. Residues 174 to 178 are Cytoplasmic-facing; it reads SMASG.

Belongs to the Casparian strip membrane proteins (CASP) family. Homodimer and heterodimers.

The protein resides in the cell membrane. The polypeptide is CASP-like protein 5A1 (Oryza sativa subsp. japonica (Rice)).